The sequence spans 431 residues: Divalent metal cation transporter MntH (431 aa).

The next 12 helical transmembrane spans lie at 30–50 (WSWT…IDPG), 63–83 (GYTL…IQTL), 106–126 (PLVW…DLAE), 137–159 (LFGL…ALHL), 169–189 (ILIG…LVLS), 209–229 (YALY…VIYL), 257–277 (VILG…MAAA), 287–307 (VATI…VTAS), 309–329 (VFGL…TLSG), 341–361 (IPLW…IMLG), 367–387 (ALVA…VPLL), and 405–425 (VTGV…YVLF).

It belongs to the NRAMP family.

The protein localises to the cell inner membrane. Functionally, h(+)-stimulated, divalent metal cation uptake system. This chain is Divalent metal cation transporter MntH, found in Chromohalobacter salexigens (strain ATCC BAA-138 / DSM 3043 / CIP 106854 / NCIMB 13768 / 1H11).